A 128-amino-acid chain; its full sequence is Glycine cleavage system H protein (128 aa).

One can recognise a Lipoyl-binding domain in the interval 25 to 107 (TVRVGITDFA…YEGGWLFEIT (83 aa)). Lys66 bears the N6-lipoyllysine mark.

Belongs to the GcvH family. The glycine cleavage system is composed of four proteins: P, T, L and H. The cofactor is (R)-lipoate.

Functionally, the glycine cleavage system catalyzes the degradation of glycine. The H protein shuttles the methylamine group of glycine from the P protein to the T protein. This is Glycine cleavage system H protein from Micrococcus luteus (strain ATCC 4698 / DSM 20030 / JCM 1464 / CCM 169 / CCUG 5858 / IAM 1056 / NBRC 3333 / NCIMB 9278 / NCTC 2665 / VKM Ac-2230) (Micrococcus lysodeikticus).